A 211-amino-acid chain; its full sequence is Claudin-1 (211 aa).

At Met-1–Gln-7 the chain is on the cytoplasmic side. The chain crosses the membrane as a helical span at residues Leu-8 to Pro-28. Over Gln-29–Arg-81 the chain is Extracellular. A disulfide bond links Cys-54 and Cys-64. Residues Ala-82–Met-102 form a helical membrane-spanning segment. Residues Lys-103–Lys-115 lie on the Cytoplasmic side of the membrane. Residues Met-116 to Ala-136 traverse the membrane as a helical segment. Topologically, residues Thr-137–Gln-163 are extracellular. A helical transmembrane segment spans residues Ala-164–Cys-184. Over Ser-185–Val-211 the chain is Cytoplasmic. Residues Thr-190–Val-211 are disordered. The interval Tyr-210–Val-211 is interactions with TJP1, TJP2, TJP3 and PATJ.

It belongs to the claudin family. Can form homo- and heteropolymers with other CLDN. Homopolymers interact with CLDN3, but not CLDN2, homopolymers. Directly interacts with TJP1/ZO-1, TJP2/ZO-2 and TJP3/ZO-3. Interacts with MPDZ and PATJ. Interacts with OCLN, CD81, CLDN4, CLDN6 and CLDN9. Detected in epidermis and liver (at protein level). Widely expressed, with highest levels in liver and kidney.

It localises to the cell junction. It is found in the tight junction. The protein localises to the cell membrane. The protein resides in the basolateral cell membrane. Claudins function as major constituents of the tight junction complexes that regulate the permeability of epithelia. While some claudin family members play essential roles in the formation of impermeable barriers, others mediate the permeability to ions and small molecules. Often, several claudin family members are coexpressed and interact with each other, and this determines the overall permeability. CLDN1 is required to prevent the paracellular diffusion of small molecules through tight junctions in the epidermis and is required for the normal barrier function of the skin. Required for normal water homeostasis and to prevent excessive water loss through the skin, probably via an indirect effect on the expression levels of other proteins, since CLDN1 itself seems to be dispensable for water barrier formation in keratinocyte tight junctions. This chain is Claudin-1 (Cldn1), found in Mus musculus (Mouse).